Reading from the N-terminus, the 433-residue chain is 3-phosphoshikimate 1-carboxyvinyltransferase (433 aa).

Residues Lys23, Ser24, and Arg28 each coordinate 3-phosphoshikimate. Residue Lys23 participates in phosphoenolpyruvate binding. Phosphoenolpyruvate contacts are provided by Gly95 and Arg123. The 3-phosphoshikimate site is built by Ser170, Ser171, Gln172, Ser198, Asp317, and Lys344. A phosphoenolpyruvate-binding site is contributed by Gln172. Asp317 serves as the catalytic Proton acceptor. Phosphoenolpyruvate-binding residues include Arg348, Arg391, and Lys416.

It belongs to the EPSP synthase family. As to quaternary structure, monomer.

The protein resides in the cytoplasm. The enzyme catalyses 3-phosphoshikimate + phosphoenolpyruvate = 5-O-(1-carboxyvinyl)-3-phosphoshikimate + phosphate. It functions in the pathway metabolic intermediate biosynthesis; chorismate biosynthesis; chorismate from D-erythrose 4-phosphate and phosphoenolpyruvate: step 6/7. In terms of biological role, catalyzes the transfer of the enolpyruvyl moiety of phosphoenolpyruvate (PEP) to the 5-hydroxyl of shikimate-3-phosphate (S3P) to produce enolpyruvyl shikimate-3-phosphate and inorganic phosphate. The chain is 3-phosphoshikimate 1-carboxyvinyltransferase from Neisseria meningitidis serogroup B (strain ATCC BAA-335 / MC58).